A 100-amino-acid chain; its full sequence is Large ribosomal subunit protein bL28 (100 aa).

Belongs to the bacterial ribosomal protein bL28 family.

This chain is Large ribosomal subunit protein bL28, found in Ehrlichia ruminantium (strain Gardel).